Consider the following 571-residue polypeptide: MSFKMTQSQYTSLYGPTVGDSVRLGDTNLFARVERDYATYGDEAAFGGGKSIRDGMAQNPNVTRDDKQVADLVITNAMIIDYDKIVKADIGVKNGYIMKIGKAGNPDIMDNVDIIIGATTDIISAEGKIVTAGGIDTHVHFINPEQSQVALESGITTHIGGGTGASEGTKATTVTPGPWHLHRMLLAAESLPLNIGFTGKGQAVNHTALVEQIHAGAIGLKVHEDWGATPSALDHALQVADDYDVQIALHADTLNEAGFMEETMAAVKDRVLHMYHTEGAGGGHAPDLIKSAAYANILPSSTNPTLPYTVNTIDEHLDMVMITHHLNASIPEDIAFADSRIRKETIAAEDVLQDMGVFSMVSSDSQAMGRVGEVITRTWQVAHRMKEQRGLLDGDSEYNDNNRIKRYIAKYTINPAITHGISDYVGSIDEGKLADIILWEPAFFGVKPDVIVKGGLINAAINGDANGSIPTSEPLKYRKMYGQLGGNLQSTSMTFVSTTAYENDIGKLLGLKRKLRPVHNIRKLSKKDMKNNNATPDLDVDPQTYEVFVDGEKITSEPATELPLTQRYFLF.

Positions 133–571 (GGIDTHVHFI…LPLTQRYFLF (439 aa)) constitute a Urease domain. Positions 138, 140, and 221 each coordinate Ni(2+). At Lys-221 the chain carries N6-carboxylysine. His-223 contributes to the substrate binding site. His-250 and His-276 together coordinate Ni(2+). Catalysis depends on His-324, which acts as the Proton donor. Position 364 (Asp-364) interacts with Ni(2+).

The protein belongs to the metallo-dependent hydrolases superfamily. Urease alpha subunit family. As to quaternary structure, heterotrimer of UreA (gamma), UreB (beta) and UreC (alpha) subunits. Three heterotrimers associate to form the active enzyme. It depends on Ni cation as a cofactor. In terms of processing, carboxylation allows a single lysine to coordinate two nickel ions.

It is found in the cytoplasm. The catalysed reaction is urea + 2 H2O + H(+) = hydrogencarbonate + 2 NH4(+). It participates in nitrogen metabolism; urea degradation; CO(2) and NH(3) from urea (urease route): step 1/1. The protein is Urease subunit alpha of Staphylococcus saprophyticus subsp. saprophyticus (strain ATCC 15305 / DSM 20229 / NCIMB 8711 / NCTC 7292 / S-41).